Reading from the N-terminus, the 586-residue chain is MDRNTLIGLVLIALIMMAWFQLMAPKKPLPEEKAQQERLEAVAESIDIKNQLVQDSLQKANPTQKFGELGQFAVGEEKKIQIETDLFTATLSTKGATLRSFIQKDYLNYKHEPFNLISNEDGTLSLFFATRDGKVVNTGELYFDPKTDQKNFRISGDNKVRIPFEISTEDGRRIEITYIFSGNSYEFGYETNLAGFGKFVSGNEYQVVWTGGLSNAEKNVNDEATNSYAEAYLGGSTLRLDASHVDETYKEQPSGNAKWVAVRSKYFVAGLISKEETEGVFMEGSRNTNDEKSVFEDYMVALKLKLPSDQTTVNSRFSVYIGPLKYDLVKATGSELEKIIDFGWEWVTRPFAEYLIIPIFNFLNNHVDSYGVIIILFALFIKLVTYPLTMASTKSMKKMAALQPQLKAIQEQYKDNPEKLQAEISGIYREAGVNPLGGCLPTVIQMPLLFAMFYVFRSSIQLRQEGFLWSNDLSVPDSILDLPFSIPLYGDHVSVIPILMGVAVFFQQKLTPSTQTNDQMKFMMYLFPGMMLIFFNNMPSGLGLYYLMFNVFSIAQQFYINQTTETEPVVLKDKSKQKAKPARKKK.

Helical transmembrane passes span 5–25, 371–391, 436–456, 486–506, and 522–542; these read TLIG…LMAP, GVII…LTMA, LGGC…FYVF, IPLY…AVFF, and FMMY…PSGL.

The protein belongs to the OXA1/ALB3/YidC family. Type 1 subfamily. Interacts with the Sec translocase complex via SecD. Specifically interacts with transmembrane segments of nascent integral membrane proteins during membrane integration.

The protein localises to the cell inner membrane. Its function is as follows. Required for the insertion and/or proper folding and/or complex formation of integral membrane proteins into the membrane. Involved in integration of membrane proteins that insert both dependently and independently of the Sec translocase complex, as well as at least some lipoproteins. Aids folding of multispanning membrane proteins. This Chloroherpeton thalassium (strain ATCC 35110 / GB-78) protein is Membrane protein insertase YidC.